A 609-amino-acid polypeptide reads, in one-letter code: Probable ubiquitin-conjugating enzyme E2 25 (609 aa).

2 disordered regions span residues 70-99 (EEDEYAVGSPGDDYGYPESSPLSNSLLDPE) and 151-185 (ADKESASSSKSSHANNGNNSSKKATKASGIHSQFS). Positions 156–178 (ASSSKSSHANNGNNSSKKATKAS) are enriched in low complexity. Residues 332-492 (DWAKRIQDEW…TFILSLKTMV (161 aa)) form the UBC core domain. The active-site Glycyl thioester intermediate is the Cys-418.

This sequence belongs to the ubiquitin-conjugating enzyme family. As to expression, expressed in seeds, pistils, siliques, hypocotyls and leaves.

It carries out the reaction S-ubiquitinyl-[E1 ubiquitin-activating enzyme]-L-cysteine + [E2 ubiquitin-conjugating enzyme]-L-cysteine = [E1 ubiquitin-activating enzyme]-L-cysteine + S-ubiquitinyl-[E2 ubiquitin-conjugating enzyme]-L-cysteine.. It functions in the pathway protein modification; protein ubiquitination. Its function is as follows. Accepts the ubiquitin from the E1 complex and catalyzes its covalent attachment to other proteins. In Arabidopsis thaliana (Mouse-ear cress), this protein is Probable ubiquitin-conjugating enzyme E2 25 (UBC25).